Consider the following 412-residue polypeptide: MLNYQQPDASGHFGRYGGSFVAETLIHALDELKAAYARYRDDPEFVAEFKSELAHFVGRPSPIYHAARMSRELGGAQIYLKREDLNHTGAHKINNTIGQALLARRMGKPRVIAETGAGQHGVATATICARYGMECVVYMGSEDVKRQSPNVYRMHLLGARVVPVDSGSKTLKDALNEALRDWVTNVENTFYIIGTVAGPAPYPEMVRDFQSVIGEECLRQMPEMAGRQPDAVIACVGGGSNAMGIFYPYIRHEGVRLIGVEAAGHGLDSGKHAASLSAGSPGVLHGNRTYLLQDANGQIIETHSISAGLDYPGVGPEHAYLKDIGRAEYVGITDDEALQAFHRLCRTEGIIPALESSHAVAYAMKLAPTMRSDQSLLVNLSGRGDKDIGTVADLSGAEFYDRPSSRGEKVKQ.

K92 is modified (N6-(pyridoxal phosphate)lysine).

It belongs to the TrpB family. As to quaternary structure, tetramer of two alpha and two beta chains. It depends on pyridoxal 5'-phosphate as a cofactor.

The enzyme catalyses (1S,2R)-1-C-(indol-3-yl)glycerol 3-phosphate + L-serine = D-glyceraldehyde 3-phosphate + L-tryptophan + H2O. Its pathway is amino-acid biosynthesis; L-tryptophan biosynthesis; L-tryptophan from chorismate: step 5/5. Its function is as follows. The beta subunit is responsible for the synthesis of L-tryptophan from indole and L-serine. In Methylibium petroleiphilum (strain ATCC BAA-1232 / LMG 22953 / PM1), this protein is Tryptophan synthase beta chain.